The following is a 1143-amino-acid chain: cGMP-specific 3',5'-cyclic phosphodiesterase (1143 aa).

2 stretches are compositionally biased toward low complexity: residues 1–19 (MHGPVSRSSSSSNMTDVSS) and 31–45 (TTSSSSAATTSASSS). The interval 1-167 (MHGPVSRSSS…KASTTASQQD (167 aa)) is disordered. Residues 46–59 (KPLTNGANKTTIST) are compositionally biased toward polar residues. Low complexity predominate over residues 75 to 84 (GAIPASSSSG). Residues 96 to 107 (SNNNRPAATNRS) are compositionally biased toward polar residues. Residues 131–153 (SSSSPSQSPSQTQASIQTQTSQQ) are compositionally biased toward low complexity. GAF domains are found at residues 272–424 (DIDV…GIGI) and 456–637 (NLEC…GLGI). Residues 667–990 (SQDQTEKLTQ…RNWQDLAEKV (324 aa)) enclose the PDEase domain. His-743 acts as the Proton donor in catalysis. The a divalent metal cation site is built by His-747, His-783, Asp-784, and Asp-894. 2 disordered regions span residues 1031 to 1060 (QQSQHGSEDSHTPEHQRSGSRLSMKKTGAL) and 1090 to 1143 (SHVS…CALL). Composition is skewed to basic and acidic residues over residues 1036–1047 (GSEDSHTPEHQR) and 1090–1100 (SHVSEDMDDKS). The segment covering 1109–1127 (ASGSMGRMSASSSTSSTGG) has biased composition (low complexity). Residues 1133–1143 (SKKRSKLCALL) are compositionally biased toward basic residues. The residue at position 1140 (Cys-1140) is a Cysteine methyl ester. Cys-1140 is lipidated: S-farnesyl cysteine. Positions 1141–1143 (ALL) are cleaved as a propeptide — removed in mature form.

This sequence belongs to the cyclic nucleotide phosphodiesterase family. Interacts with PrBP. The cofactor is a divalent metal cation.

The protein resides in the cell membrane. It catalyses the reaction 3',5'-cyclic GMP + H2O = GMP + H(+). Its function is as follows. Has a role regulating cGMP transport in Malpighian tubule principal cells. The polypeptide is cGMP-specific 3',5'-cyclic phosphodiesterase (Drosophila simulans (Fruit fly)).